The sequence spans 676 residues: Methionine--tRNA ligase (676 aa).

Residues 15–25 (PYANGSIHLGH) carry the 'HIGH' region motif. C146, C149, C159, and C162 together coordinate Zn(2+). Positions 332–336 (KMSKS) match the 'KMSKS' region motif. Position 335 (K335) interacts with ATP. The 103-residue stretch at 574–676 (DFAKVDMRIA…SGAQPGQQVK (103 aa)) folds into the tRNA-binding domain.

This sequence belongs to the class-I aminoacyl-tRNA synthetase family. MetG type 1 subfamily. As to quaternary structure, homodimer. Zn(2+) serves as cofactor.

It is found in the cytoplasm. It carries out the reaction tRNA(Met) + L-methionine + ATP = L-methionyl-tRNA(Met) + AMP + diphosphate. Is required not only for elongation of protein synthesis but also for the initiation of all mRNA translation through initiator tRNA(fMet) aminoacylation. In Erwinia tasmaniensis (strain DSM 17950 / CFBP 7177 / CIP 109463 / NCPPB 4357 / Et1/99), this protein is Methionine--tRNA ligase.